A 624-amino-acid polypeptide reads, in one-letter code: Phragmoplastin DRP1E (624 aa).

N-acetylthreonine is present on Thr2. One can recognise a Dynamin-type G domain in the interval 37–306 (WEALPTVAVV…LESVIRTRIP (270 aa)). The interval 47 to 54 (GGQSSGKS) is G1 motif. 50-55 (SSGKSS) serves as a coordination point for GTP. Residues 73 to 75 (VTR) are G2 motif. The tract at residues 148 to 151 (DLPG) is G3 motif. A G4 motif region spans residues 217-220 (TKLD). Residues 218–223 (KLDLMD) and 248–251 (NRSQ) contribute to the GTP site. The G5 motif stretch occupies residues 247–250 (VNRS). Residues 532-624 (FRRIASNVSA…DEIDAVAWVR (93 aa)) form the GED domain.

It belongs to the TRAFAC class dynamin-like GTPase superfamily. Dynamin/Fzo/YdjA family. In terms of assembly, forms homodimer and may homooligomerize and heterooligomerize to form the phragmoplastin complex. Binds to PHIP1. In terms of tissue distribution, ubiquitous.

The protein localises to the cytoplasm. Its subcellular location is the cytoskeleton. It is found in the phragmoplast. The enzyme catalyses GTP + H2O = GDP + phosphate + H(+). Functionally, microtubule-associated force-producing protein that is targeted to the tubulo-vesicular network of the forming cell plate during cytokinesis. Also plays a major role in plasma membrane maintenance and cell wall integrity with an implication in vesicular trafficking, polar cell expansion, and other aspects of plant growth and development. Has a GTPase activity. The polypeptide is Phragmoplastin DRP1E (Arabidopsis thaliana (Mouse-ear cress)).